A 347-amino-acid chain; its full sequence is Probable dual-specificity RNA methyltransferase RlmN (347 aa).

Glutamate 91 acts as the Proton acceptor in catalysis. A Radical SAM core domain is found at tyrosine 97 to aspartate 327. Cysteine 104 and cysteine 332 form a disulfide bridge. [4Fe-4S] cluster is bound by residues cysteine 111, cysteine 115, and cysteine 118. Residues glycine 158–glutamate 159, serine 190, serine 213–histidine 215, and asparagine 289 contribute to the S-adenosyl-L-methionine site. Cysteine 332 (S-methylcysteine intermediate) is an active-site residue.

It belongs to the radical SAM superfamily. RlmN family. [4Fe-4S] cluster serves as cofactor.

The protein localises to the cytoplasm. The enzyme catalyses adenosine(2503) in 23S rRNA + 2 reduced [2Fe-2S]-[ferredoxin] + 2 S-adenosyl-L-methionine = 2-methyladenosine(2503) in 23S rRNA + 5'-deoxyadenosine + L-methionine + 2 oxidized [2Fe-2S]-[ferredoxin] + S-adenosyl-L-homocysteine. The catalysed reaction is adenosine(37) in tRNA + 2 reduced [2Fe-2S]-[ferredoxin] + 2 S-adenosyl-L-methionine = 2-methyladenosine(37) in tRNA + 5'-deoxyadenosine + L-methionine + 2 oxidized [2Fe-2S]-[ferredoxin] + S-adenosyl-L-homocysteine. In terms of biological role, specifically methylates position 2 of adenine 2503 in 23S rRNA and position 2 of adenine 37 in tRNAs. This chain is Probable dual-specificity RNA methyltransferase RlmN, found in Clostridium perfringens (strain 13 / Type A).